A 350-amino-acid polypeptide reads, in one-letter code: Putative D-xylulose reductase (350 aa).

Cysteine 43, histidine 68, and glutamate 154 together coordinate Zn(2+).

The protein belongs to the zinc-containing alcohol dehydrogenase family. Requires Zn(2+) as cofactor.

It catalyses the reaction xylitol + NAD(+) = D-xylulose + NADH + H(+). In Agrobacterium fabrum (strain C58 / ATCC 33970) (Agrobacterium tumefaciens (strain C58)), this protein is Putative D-xylulose reductase.